The sequence spans 347 residues: NADH-ubiquinone oxidoreductase chain 2 (347 aa).

A run of 10 helical transmembrane segments spans residues 13–33 (IFAG…WVGL), 55–75 (AAIK…MAIL), 96–116 (LMIV…FWVP), 123–143 (PLMS…SIMY), 150–170 (NVSL…WGGL), 178–198 (ILAY…PYNP), 201–221 (TILN…LLNL), 247–267 (TLLS…WLII), 277–297 (ITPT…LRLI), and 325–345 (FLPT…FMLM).

It belongs to the complex I subunit 2 family. In terms of assembly, core subunit of respiratory chain NADH dehydrogenase (Complex I) which is composed of 45 different subunits. Interacts with TMEM242.

Its subcellular location is the mitochondrion inner membrane. It catalyses the reaction a ubiquinone + NADH + 5 H(+)(in) = a ubiquinol + NAD(+) + 4 H(+)(out). Functionally, core subunit of the mitochondrial membrane respiratory chain NADH dehydrogenase (Complex I) which catalyzes electron transfer from NADH through the respiratory chain, using ubiquinone as an electron acceptor. Essential for the catalytic activity and assembly of complex I. The polypeptide is NADH-ubiquinone oxidoreductase chain 2 (Gorilla gorilla gorilla (Western lowland gorilla)).